Here is a 383-residue protein sequence, read N- to C-terminus: Transcription termination factor Rho (383 aa).

The tract at residues 1 to 22 (MTIETTTKKRPRAARPPRPRES) is disordered. The segment covering 8–17 (KKRPRAARPP) has biased composition (basic residues). One can recognise a Rho RNA-BD domain in the interval 26-93 (LETVAGLLDV…AEVESVNGST (68 aa)). ATP contacts are provided by residues 132–137 (GKGQRG), 144–149 (KAGKTM), and R175.

The protein belongs to the Rho family. Homohexamer. The homohexamer assembles into an open ring structure.

Facilitates transcription termination by a mechanism that involves Rho binding to the nascent RNA, activation of Rho's RNA-dependent ATPase activity, and release of the mRNA from the DNA template. This is Transcription termination factor Rho from Streptosporangium roseum (strain ATCC 12428 / DSM 43021 / JCM 3005 / KCTC 9067 / NCIMB 10171 / NRRL 2505 / NI 9100).